Here is a 146-residue protein sequence, read N- to C-terminus: Cytochrome b5 type B (146 aa).

Residues 1-11 (MATPEASGSGE) constitute a propeptide that is removed on maturation. Ser19 is modified (phosphoserine). A Cytochrome b5 heme-binding domain is found at 20 to 96 (VTYYRLEEVA…LKQYYIGDVH (77 aa)). Lys30 carries the N6-acetyllysine modification. Ser33 is subject to Phosphoserine. His55 and His79 together coordinate heme. Ser80 carries the post-translational modification Phosphoserine. The chain crosses the membrane as a helical span at residues 119–136 (WAYWFVPIVGAILIGFLY).

This sequence belongs to the cytochrome b5 family. In terms of assembly, component of a complex composed of cytochrome b5, NADH-cytochrome b5 reductase (CYB5R3) and MTARC2.

The protein localises to the mitochondrion outer membrane. Functionally, cytochrome b5 is a membrane-bound hemoprotein functioning as an electron carrier for several membrane-bound oxygenases. This Mus musculus (Mouse) protein is Cytochrome b5 type B (Cyb5b).